Reading from the N-terminus, the 139-residue chain is Holo-[acyl-carrier-protein] synthase (139 aa).

D8 and E61 together coordinate Mg(2+).

The protein belongs to the P-Pant transferase superfamily. AcpS family. It depends on Mg(2+) as a cofactor.

It is found in the cytoplasm. It carries out the reaction apo-[ACP] + CoA = holo-[ACP] + adenosine 3',5'-bisphosphate + H(+). Transfers the 4'-phosphopantetheine moiety from coenzyme A to a Ser of acyl-carrier-protein. The polypeptide is Holo-[acyl-carrier-protein] synthase (Rhodopseudomonas palustris (strain BisA53)).